Here is a 143-residue protein sequence, read N- to C-terminus: Transcriptional regulator MraZ (143 aa).

SpoVT-AbrB domains lie at 5–47 (EYKH…SLKE) and 76–119 (ACEC…SENN).

The protein belongs to the MraZ family. Forms oligomers.

The protein localises to the cytoplasm. Its subcellular location is the nucleoid. In Caldicellulosiruptor bescii (strain ATCC BAA-1888 / DSM 6725 / KCTC 15123 / Z-1320) (Anaerocellum thermophilum), this protein is Transcriptional regulator MraZ.